Here is a 511-residue protein sequence, read N- to C-terminus: Maturase K (511 aa).

Belongs to the intron maturase 2 family. MatK subfamily.

It is found in the plastid. Its subcellular location is the chloroplast. Usually encoded in the trnK tRNA gene intron. Probably assists in splicing its own and other chloroplast group II introns. The chain is Maturase K from Hordeum murinum subsp. leporinum (Mouse barley).